Consider the following 207-residue polypeptide: Ras-related protein Rab-8A (207 aa).

GTP-binding residues include Ser-17, Gly-18, Val-19, Gly-20, Lys-21, Thr-22, Cys-23, Ser-35, Ser-39, and Thr-40. Position 22 (Thr-22) interacts with Mg(2+). 2 consecutive short sequence motifs (switch) follow at residues 31 to 45 and 63 to 80; these read DAFN…GIDF and DTAG…YYRG. Residues Thr-40 and Asp-63 each contribute to the Mg(2+) site. Residue Gly-66 participates in GTP binding. Thr-72 carries the post-translational modification Phosphothreonine. Residues Asn-121, Lys-122, Asp-124, Ala-152, and Lys-153 each coordinate GTP. Phosphoserine occurs at positions 181 and 185. At Cys-204 the chain carries Cysteine methyl ester. Residue Cys-204 is the site of S-geranylgeranyl cysteine attachment. Residues 205–207 constitute a propeptide, removed in mature form; it reads VLL.

This sequence belongs to the small GTPase superfamily. Rab family. In terms of assembly, interacts (GTP-bound form) with MICALL1; regulates RAB8A association with recycling endosomes. Interacts with MICALL2; competes with RAB13 and is involved in E-cadherin endocytic recycling. Interacts (GTP-bound form) with MICAL1, MICALCL, MICAL3, EHBP1 and EHBP1L1; at least in case of MICAL1, MICALCL, MICAL3 and EHBP1L1 two molecules of RAB8A can bind to one molecule of the effector protein; ternary complexes of RAB8A, RAB13 and either MICAL1 or EHBP1L1 are possible. Interacts with EHD1. Interacts with MAP4K2 and SYTL4. Interacts with SGSM1 and SGSM3. Interacts with RABIF, RIMS2, RPH3A and RPH3A. Interacts with OPTN. Interacts with RAB3IP, RAB3IP functions as guanine exchange factor (GEF). Interacts with MYO5B. Interacts with CIMAP3. Interacts with BIRC6/bruce. Interacts with OCRL. Interacts with AHI1. Interacts with DCDC1. Interacts with LRRK2; interaction facilitates phosphorylation of Thr-72. Interacts with RAB31P, GDI1, GDI2, CHM, CHML, RABGGTA, RABGGTB, TBC1D15 and INPP5B; these interactions are dependent on Thr-72 not being phosphorylated. Interacts with RILPL1 and RILPL2; these interactions are dependent on the phosphorylation of Thr-72 by LRRK2. Interacts with DZIP1; prevents inhibition by the GDP-dissociation inhibitor GDI2. Interacts (in GDP-bound form) with RAB3IP/Rabin8, RAB3IP functions as guanine exchange factor (GEF) towards RAB8A. Interacts (in GDP-bound form) with RPGR, RPGR functions as GEF towards RAB8A. Mg(2+) is required as a cofactor. Post-translationally, phosphorylation of Thr-72 in the switch II region by LRRK2 prevents the association of RAB regulatory proteins, including CHM, CHML and RAB GDP dissociation inhibitors GDI1 and GDI2. Phosphorylation by LRRK2 is required for localization to stressed lysosomes.

It localises to the cell membrane. The protein resides in the golgi apparatus. The protein localises to the endosome membrane. Its subcellular location is the recycling endosome membrane. It is found in the cell projection. It localises to the cilium. The protein resides in the cytoplasmic vesicle. The protein localises to the phagosome membrane. Its subcellular location is the cytoplasm. It is found in the cytoskeleton. It localises to the microtubule organizing center. The protein resides in the centrosome. The protein localises to the centriole. Its subcellular location is the cilium basal body. It is found in the midbody. It localises to the lysosome. It catalyses the reaction GTP + H2O = GDP + phosphate + H(+). Regulated by guanine nucleotide exchange factors (GEFs) such as RAB3IP/Rabin8 and RPGR which promote the exchange of bound GDP for free GTP, GTPase activating proteins (GAPs) which increase the GTP hydrolysis activity, and GDP dissociation inhibitors (GDIs) which inhibit the dissociation of the nucleotide from the GTPase. Activated in response to insulin. Its function is as follows. The small GTPases Rab are key regulators of intracellular membrane trafficking, from the formation of transport vesicles to their fusion with membranes. Rabs cycle between an inactive GDP-bound form and an active GTP-bound form that is able to recruit to membranes different sets of downstream effectors directly responsible for vesicle formation, movement, tethering and fusion. RAB8A is involved in polarized vesicular trafficking and neurotransmitter release. Together with RAB11A, RAB3IP, the exocyst complex, PARD3, PRKCI, ANXA2, CDC42 and DNMBP promotes transcytosis of PODXL to the apical membrane initiation sites (AMIS), apical surface formation and lumenogenesis. Regulates the compacted morphology of the Golgi. Together with MYO5B and RAB11A participates in epithelial cell polarization. Also involved in membrane trafficking to the cilium and ciliogenesis. Together with MICALL2, may also regulate adherens junction assembly. May play a role in insulin-induced transport to the plasma membrane of the glucose transporter GLUT4 and therefore play a role in glucose homeostasis. Involved in autophagy. Participates in the export of a subset of neosynthesized proteins through a Rab8-Rab10-Rab11-dependent endososomal export route. Targeted to and stabilized on stressed lysosomes through LRRK2 phosphorylation. Suppresses stress-induced lysosomal enlargement through EHBP1 and EHNP1L1 effector proteins. This Canis lupus familiaris (Dog) protein is Ras-related protein Rab-8A (RAB8A).